A 533-amino-acid polypeptide reads, in one-letter code: Glucosidase 2 subunit beta (533 aa).

An N-terminal signal peptide occupies residues 1–13; the sequence is MLLLLLLLPMCWA. Residue serine 23 is modified to Phosphoserine. LDL-receptor class A domains lie at 36–70 and 71–112; these read FTCL…AACP and NGSF…IVCE. Intrachain disulfides connect cysteine 38–cysteine 57 and cysteine 55–cysteine 69. Aspartate 48 serves as a coordination point for substrate. Ca(2+) contacts are provided by glutamine 49, aspartate 52, tyrosine 54, aspartate 56, aspartate 62, and glutamate 63. Aspartate 52 contacts substrate. N-linked (GlcNAc...) asparagine glycosylation occurs at asparagine 71. Cystine bridges form between cysteine 76/cysteine 98, cysteine 96/cysteine 111, and cysteine 99/cysteine 115. Residue serine 88 is modified to Phosphoserine; by PKC. Residues aspartate 93, valine 95, aspartate 97, aspartate 103, and glutamate 104 each contribute to the Ca(2+) site. Residue lysine 165 is modified to N6-succinyllysine. Residue serine 167 is modified to Phosphoserine. 2 consecutive EF-hand domains span residues 208 to 243 and 244 to 279; these read RERE…DTDG and DGAL…RDKY. 4 residues coordinate Ca(2+): aspartate 221, aspartate 223, aspartate 225, and glutamate 232. Positions 284-363 are disordered; the sequence is LPTEYPPSPP…SPTEEDRMPP (80 aa). Acidic residues predominate over residues 312-336; sequence TEEEDEDEEDEETEEDEDEEDEDSQ. 2 positions are modified to phosphoserine; by PKC: serine 388 and serine 395. The 102-residue stretch at 418-519 folds into the MRH domain; the sequence is SQCYELTTNE…ELMTPAACPE (102 aa). A disulfide bridge connects residues cysteine 420 and cysteine 433. Serine 439 carries the post-translational modification Phosphoserine; by PKC. 2 cysteine pairs are disulfide-bonded: cysteine 476-cysteine 505 and cysteine 490-cysteine 517. Asparagine 481 carries N-linked (GlcNAc...) asparagine glycosylation. The Prevents secretion from ER signature appears at 530 to 533; that stretch reads HDEL.

As to quaternary structure, heterodimer of a catalytic alpha subunit (GANAB) and a beta subunit (PRKCSH). Binds glycosylated PTPRC. In terms of tissue distribution, ubiquitous. Highly expressed in liver, spleen, lung, duodenum, stomach, adrenal gland, pituitary, testis, corpus luteum, uterus and fetal ovary.

The protein resides in the endoplasmic reticulum. The protein operates within glycan metabolism; N-glycan metabolism. Its function is as follows. Regulatory subunit of glucosidase II that cleaves sequentially the 2 innermost alpha-1,3-linked glucose residues from the Glc(2)Man(9)GlcNAc(2) oligosaccharide precursor of immature glycoproteins. Required for efficient PKD1/Polycystin-1 biogenesis and trafficking to the plasma membrane of the primary cilia. This Bos taurus (Bovine) protein is Glucosidase 2 subunit beta (PRKCSH).